The following is a 299-amino-acid chain: Peroxisomal biogenesis factor 19 (299 aa).

A disordered region spans residues 1 to 63 (MAAAEEGCSV…SPGDTAKDAL (63 aa)). Position 2 is an N-acetylalanine (Ala2). The tract at residues 2–56 (AAAEEGCSVGAEADRELEELLESALDDFDKAKPSPAPPSTTTAPDASGPQKRSPG) is docking to the peroxisome membrane and binding to PEX3. The segment at 2-91 (AAAEEGCSVG…QATAEFEKAM (90 aa)) is necessary for PEX19 function on peroxisome biogenesis. Positions 16 to 27 (RELEELLESALD) are enriched in acidic residues. Residues Ser35, Ser54, and Ser66 each carry the phosphoserine modification. Thr236 is modified (phosphothreonine). Cys296 is subject to Cysteine methyl ester. Residue Cys296 is the site of S-farnesyl cysteine attachment. Positions 297 to 299 (LIM) are cleaved as a propeptide — removed in mature form.

It belongs to the peroxin-19 family. Interacts with a broad range of peroxisomal membrane proteins, including PEX3, PEX10, PEX11A, PEX11B, PEX12, PEX13, PEX14 and PEX16, PXMP2/PMP22, PXMP4/PMP24, SLC25A17/PMP34, ABCD1/ALDP, ABCD2/ALDRP, and ABCD3/PMP70. Also interacts with the tumor suppressor CDKN2A/p19ARF. In terms of assembly, (Microbial infection) Interacts with human cytomegalovirus protein UL37 isoform vMIA; this interaction inhibits the peroxisomal-dependent antiviral signaling. As to expression, ubiquitously expressed. Isoform 1 is strongly predominant in all tissues except in utero where isoform 2 is the main form.

It localises to the cytoplasm. Its subcellular location is the peroxisome membrane. Necessary for early peroxisomal biogenesis. Acts both as a cytosolic chaperone and as an import receptor for peroxisomal membrane proteins (PMPs). Binds and stabilizes newly synthesized PMPs in the cytoplasm by interacting with their hydrophobic membrane-spanning domains, and targets them to the peroxisome membrane by binding to the integral membrane protein PEX3. Excludes CDKN2A from the nucleus and prevents its interaction with MDM2, which results in active degradation of TP53. This chain is Peroxisomal biogenesis factor 19, found in Homo sapiens (Human).